Consider the following 115-residue polypeptide: NADH-ubiquinone oxidoreductase chain 3 (115 aa).

The next 3 helical transmembrane spans lie at 3 to 23, 55 to 75, and 86 to 106; these read LILT…IAFW, FFLV…LLPL, and TMLT…AYEW.

The protein belongs to the complex I subunit 3 family. As to quaternary structure, core subunit of respiratory chain NADH dehydrogenase (Complex I) which is composed of 45 different subunits. Interacts with TMEM186. Interacts with TMEM242.

The protein resides in the mitochondrion inner membrane. The catalysed reaction is a ubiquinone + NADH + 5 H(+)(in) = a ubiquinol + NAD(+) + 4 H(+)(out). Its function is as follows. Core subunit of the mitochondrial membrane respiratory chain NADH dehydrogenase (Complex I) which catalyzes electron transfer from NADH through the respiratory chain, using ubiquinone as an electron acceptor. Essential for the catalytic activity of complex I. This Rhinoceros unicornis (Greater Indian rhinoceros) protein is NADH-ubiquinone oxidoreductase chain 3.